The following is a 270-amino-acid chain: 2-dehydro-3-deoxyphosphooctonate aldolase (270 aa).

It belongs to the KdsA family.

It localises to the cytoplasm. The catalysed reaction is D-arabinose 5-phosphate + phosphoenolpyruvate + H2O = 3-deoxy-alpha-D-manno-2-octulosonate-8-phosphate + phosphate. It participates in carbohydrate biosynthesis; 3-deoxy-D-manno-octulosonate biosynthesis; 3-deoxy-D-manno-octulosonate from D-ribulose 5-phosphate: step 2/3. Its pathway is bacterial outer membrane biogenesis; lipopolysaccharide biosynthesis. This chain is 2-dehydro-3-deoxyphosphooctonate aldolase, found in Helicobacter hepaticus (strain ATCC 51449 / 3B1).